The primary structure comprises 281 residues: uncharacterized protein (281 aa).

This is an uncharacterized protein from Mycoplasma genitalium (strain ATCC 33530 / DSM 19775 / NCTC 10195 / G37) (Mycoplasmoides genitalium).